A 378-amino-acid polypeptide reads, in one-letter code: N-acetyldiaminopimelate deacetylase (378 aa).

D72 is a catalytic residue. E131 serves as the catalytic Proton acceptor.

The protein belongs to the peptidase M20A family. N-acetyldiaminopimelate deacetylase subfamily.

It carries out the reaction N-acetyl-(2S,6S)-2,6-diaminopimelate + H2O = (2S,6S)-2,6-diaminopimelate + acetate. The protein operates within amino-acid biosynthesis; L-lysine biosynthesis via DAP pathway; LL-2,6-diaminopimelate from (S)-tetrahydrodipicolinate (acetylase route): step 3/3. Its function is as follows. Catalyzes the conversion of N-acetyl-diaminopimelate to diaminopimelate and acetate. The polypeptide is N-acetyldiaminopimelate deacetylase (Enterococcus faecalis (strain ATCC 700802 / V583)).